We begin with the raw amino-acid sequence, 342 residues long: Cyclin pch1 (342 aa).

Residues 261-342 are disordered; sequence LPIDQKNGSH…TDKEMETEAS (82 aa). Positions 278–314 are enriched in polar residues; that stretch reads TPSSLASVSTQATPQHQNSSGRTDSFHSLNTETPSKS. Thr-300 bears the Phosphothreonine mark. Ser-302 carries the phosphoserine modification. The segment covering 329–342 has biased composition (basic and acidic residues); it reads KSSDTDKEMETEAS.

Belongs to the cyclin family. Cyclin C subfamily. As to quaternary structure, interacts with cdc2 protein kinase and with the N-terminal domain of cdk9.

It is found in the nucleus. Essential for progression through the whole cell cycle. In Schizosaccharomyces pombe (strain 972 / ATCC 24843) (Fission yeast), this protein is Cyclin pch1 (pch1).